We begin with the raw amino-acid sequence, 201 residues long: ATP-dependent Clp protease proteolytic subunit (201 aa).

The Nucleophile role is filled by Ser-98. His-123 is a catalytic residue.

Belongs to the peptidase S14 family. In terms of assembly, fourteen ClpP subunits assemble into 2 heptameric rings which stack back to back to give a disk-like structure with a central cavity, resembling the structure of eukaryotic proteasomes.

The protein resides in the cytoplasm. It catalyses the reaction Hydrolysis of proteins to small peptides in the presence of ATP and magnesium. alpha-casein is the usual test substrate. In the absence of ATP, only oligopeptides shorter than five residues are hydrolyzed (such as succinyl-Leu-Tyr-|-NHMec, and Leu-Tyr-Leu-|-Tyr-Trp, in which cleavage of the -Tyr-|-Leu- and -Tyr-|-Trp bonds also occurs).. Functionally, cleaves peptides in various proteins in a process that requires ATP hydrolysis. Has a chymotrypsin-like activity. Plays a major role in the degradation of misfolded proteins. This is ATP-dependent Clp protease proteolytic subunit from Rickettsia akari (strain Hartford).